The sequence spans 277 residues: MKPQNLHFDYGLVEAILVPFIRNEIRKFGFGSVVLGLSGGIDSAVVCELAVRALGVENVLALMMPYKTSSQESLDHAELMVDRLGIRYEIMPVTEVVDAFFATRPDASRLRRGNVMARSRMLCLYDVSARDGCLVLGTSNKTELMLGYGTMFGDMASAVNPIGDLYKTQIFGLARHLGIPAPLIDKPPSADLWEGQSDEADLGFSYEEVDQLLYMMLEERMDRDAILAEGIDSAFYQRVRSMVVRNQYKRMMPVIAKLSSRTPGIDFRYARDWQEVR.

ATP is bound at residue glycine 36–serine 43. A Mg(2+)-binding site is contributed by aspartate 42. Arginine 118 contributes to the deamido-NAD(+) binding site. Position 138 (threonine 138) interacts with ATP. A Mg(2+)-binding site is contributed by glutamate 143. Positions 167 and 189 each coordinate ATP.

It belongs to the NAD synthetase family. As to quaternary structure, homodimer.

It carries out the reaction deamido-NAD(+) + NH4(+) + ATP = AMP + diphosphate + NAD(+) + H(+). Its pathway is cofactor biosynthesis; NAD(+) biosynthesis; NAD(+) from deamido-NAD(+) (ammonia route): step 1/1. Its function is as follows. Catalyzes the ATP-dependent amidation of deamido-NAD to form NAD. Uses ammonia as a nitrogen source. The protein is NH(3)-dependent NAD(+) synthetase of Chlorobaculum tepidum (strain ATCC 49652 / DSM 12025 / NBRC 103806 / TLS) (Chlorobium tepidum).